The chain runs to 281 residues: NADH-quinone oxidoreductase subunit B (281 aa).

Residues Cys-37, Cys-38, Cys-103, and Cys-132 each coordinate [4Fe-4S] cluster. The segment at 242–281 is disordered; sequence DAKPLDESRAHGPGPTTADIADAADTADSDAAPGATHDTP. Over residues 257-281 the composition is skewed to low complexity; that stretch reads TTADIADAADTADSDAAPGATHDTP.

It belongs to the complex I 20 kDa subunit family. As to quaternary structure, NDH-1 is composed of 14 different subunits. Subunits NuoB, C, D, E, F, and G constitute the peripheral sector of the complex. It depends on [4Fe-4S] cluster as a cofactor.

The protein localises to the cell membrane. The enzyme catalyses a quinone + NADH + 5 H(+)(in) = a quinol + NAD(+) + 4 H(+)(out). In terms of biological role, NDH-1 shuttles electrons from NADH, via FMN and iron-sulfur (Fe-S) centers, to quinones in the respiratory chain. The immediate electron acceptor for the enzyme in this species is believed to be a menaquinone. Couples the redox reaction to proton translocation (for every two electrons transferred, four hydrogen ions are translocated across the cytoplasmic membrane), and thus conserves the redox energy in a proton gradient. The polypeptide is NADH-quinone oxidoreductase subunit B (Frankia alni (strain DSM 45986 / CECT 9034 / ACN14a)).